Here is a 199-residue protein sequence, read N- to C-terminus: Thymidine kinase (199 aa).

ATP contacts are provided by residues 15–22 (GSMFSGKS) and 88–91 (DEIQ). Residue E89 is the Proton acceptor of the active site. The Zn(2+) site is built by C145, C148, C183, and H186.

The protein belongs to the thymidine kinase family. Homotetramer.

It localises to the cytoplasm. It carries out the reaction thymidine + ATP = dTMP + ADP + H(+). This Staphylococcus haemolyticus (strain JCSC1435) protein is Thymidine kinase.